The chain runs to 318 residues: Protein phosphatase 1 regulatory subunit 3C (318 aa).

The short motif at 84–87 (RVVF) is the PP1-binding motif element. Positions 141 to 263 (PSADYLSFRN…YRIVHVQWKP (123 aa)) are interaction with EPM2A. The 109-residue stretch at 149–257 (RNHFQKNSVC…NNEGQNYRIV (109 aa)) folds into the CBM21 domain.

Interacts with PPP1CC catalytic subunit of PP1 and associates with glycogen. Forms complexes with glycogen phosphorylase, glycogen synthase and phosphorylase kinase which is necessary for its regulation of PP1 activity. Also interacts with EPM2A/laforin. Ubiquitinated by NHLRC1/malin in a EPM2A/laforin-dependent manner.

In terms of biological role, acts as a glycogen-targeting subunit for PP1 and regulates its activity. Activates glycogen synthase, reduces glycogen phosphorylase activity and limits glycogen breakdown. Dramatically increases basal and insulin-stimulated glycogen synthesis upon overexpression in a variety of cell types. The chain is Protein phosphatase 1 regulatory subunit 3C from Bos taurus (Bovine).